Here is a 379-residue protein sequence, read N- to C-terminus: D-threonine aldolase (379 aa).

Lys59 carries the N6-(pyridoxal phosphate)lysine modification.

The protein belongs to the DSD1 family. The cofactor is pyridoxal 5'-phosphate. Mn(2+) is required as a cofactor. It depends on Co(2+) as a cofactor. Requires Ni(2+) as cofactor. Mg(2+) serves as cofactor.

It carries out the reaction D-threonine = acetaldehyde + glycine. The enzyme catalyses D-allo-threonine = acetaldehyde + glycine. Its activity is regulated as follows. Inhibited by the carbonyl reagents hydroxylamine, phenylhydrazine and semicarbazide. Inhibited by the chelating agent EDTA. Inhibited by the sulfhydryl reagent p-chloromercuribenzoic acid, and by sodium cyanide. Inhibited by iodoacetate, Ag(2)SO(4), HgCl(2) and CdCl(2). Competitively inhibited by beta-hydroxyaspartate and O-phospho-DL-threonine. Catalyzes the reversible cleavage of D-threonine or D-allothreonine into glycine and acetaldehyde. Can also cleave D-beta-phenylserine, D-beta-hydroxy-alpha-aminovaleric acid, D-beta-3,4-dihydroxyphenylserine and D-beta-3,4-methylenedioxyphenylserine into glycine and the corresponding aldehyde compounds. Inactive towards D-serine, beta-hydroxyaspartate and O-phospho-DL-threonine. This Arthrobacter sp protein is D-threonine aldolase.